The chain runs to 550 residues: Leucine-rich repeat LGI family member 2 (550 aa).

A signal peptide spans 1–25; the sequence is MALWRGGGALGLLLLSAACLIPPSA. The LRRNT domain occupies 26–62; the sequence is QVRRLARCPATCSCTKESIICVGSSWVPRIVPGDISS. Asparagine 67 carries N-linked (GlcNAc...) asparagine glycosylation. LRR repeat units lie at residues 83–104 and 107–128; these read SLQLLLLNSNSFTVIRDDAFAG and HLEYLFIEGNKIETISRNAFRG. Positions 140–190 constitute an LRRCT domain; the sequence is NKFECDCKAKWLYLWLKMTNSTVSDVLCIGPPEYQEKKLNEVTSFDYECTT. A glycan (N-linked (GlcNAc...) asparagine) is linked at asparagine 159. 7 EAR repeats span residues 224–266, 270–312, 316–363, 365–408, 412–455, 457–499, and 503–545; these read DFVV…EWDH, NFRS…KYDE, KFVK…KWNS, GFYS…QWNK, KFVP…RWNS, QFVE…QWDK, and QFKK…EHII. N-linked (GlcNAc...) asparagine glycosylation is present at asparagine 276. N-linked (GlcNAc...) asparagine glycosylation occurs at asparagine 407.

Brain.

It localises to the secreted. Its function is as follows. Required for the development of soma-targeting inhibitory GABAergic synapses made by parvalbumin-positive basket cells. The sequence is that of Leucine-rich repeat LGI family member 2 (Lgi2) from Mus musculus (Mouse).